The primary structure comprises 535 residues: Alcohol O-acetyltransferase 2 (535 aa).

The interval Gly19 to Arg36 is membrane association. Residues His189 and Asp193 each act as charge relay system in the active site. Positions Arg515–Phe532 are membrane association.

The protein belongs to the ATF1 alcohol acetyltransferase family.

It localises to the lipid droplet. The protein localises to the endoplasmic reticulum membrane. It catalyses the reaction an aliphatic alcohol + acetyl-CoA = an acetyl ester + CoA. Can use acetyl-CoA to synthesize acetate esters from various alcohols, producing ethyl acetate, isoamyl acetate, isobutyl acetate, butyl acetate, hexyl acetate, heptyl acetate and octyl acetate. ATF2 seems to play only a minor role in the acetate ester synthesis, compared to ATF1. Plays an active role in the detoxification hydroxysteroids and possibly certain phytochemicals, in association with the efflux pumps PDR5 and SNQ2. This is Alcohol O-acetyltransferase 2 from Saccharomyces cerevisiae (strain ATCC 204508 / S288c) (Baker's yeast).